The chain runs to 113 residues: Hydrogenase maturation factor HypA (113 aa).

H2 lines the Ni(2+) pocket. Zn(2+) is bound by residues C73, C76, C89, and C92.

It belongs to the HypA/HybF family.

Its function is as follows. Involved in the maturation of [NiFe] hydrogenases. Required for nickel insertion into the metal center of the hydrogenase. This chain is Hydrogenase maturation factor HypA, found in Actinobacillus succinogenes (strain ATCC 55618 / DSM 22257 / CCUG 43843 / 130Z).